The sequence spans 118 residues: Large ribosomal subunit protein bL20 (118 aa).

Belongs to the bacterial ribosomal protein bL20 family.

Functionally, binds directly to 23S ribosomal RNA and is necessary for the in vitro assembly process of the 50S ribosomal subunit. It is not involved in the protein synthesizing functions of that subunit. The protein is Large ribosomal subunit protein bL20 of Thermotoga neapolitana (strain ATCC 49049 / DSM 4359 / NBRC 107923 / NS-E).